A 147-amino-acid chain; its full sequence is MVDHARAARMAKRIQTIVASAIERQIKDRRLELVTITDARVTGDLHDATVFYTVRGTDIGTEPDYDQAAEALTRAKGQLRKIVGDELSVRFTPTLSFELDTVPEASAHMEELLARARARDAELAKLKEGAQPAGDANPYKTSDEEED.

The segment at 123–147 (LAKLKEGAQPAGDANPYKTSDEEED) is disordered.

The protein belongs to the RbfA family. As to quaternary structure, monomer. Binds 30S ribosomal subunits, but not 50S ribosomal subunits or 70S ribosomes.

It localises to the cytoplasm. One of several proteins that assist in the late maturation steps of the functional core of the 30S ribosomal subunit. Associates with free 30S ribosomal subunits (but not with 30S subunits that are part of 70S ribosomes or polysomes). Required for efficient processing of 16S rRNA. May interact with the 5'-terminal helix region of 16S rRNA. This Corynebacterium aurimucosum (strain ATCC 700975 / DSM 44827 / CIP 107346 / CN-1) (Corynebacterium nigricans) protein is Ribosome-binding factor A.